Reading from the N-terminus, the 339-residue chain is D-erythrose-4-phosphate dehydrogenase (339 aa).

11-12 provides a ligand contact to NAD(+); it reads RI. Substrate-binding positions include 153 to 155, Arg-199, 212 to 213, and Arg-235; these read SCT and TK. Catalysis depends on Cys-154, which acts as the Nucleophile. An NAD(+)-binding site is contributed by Asn-317.

This sequence belongs to the glyceraldehyde-3-phosphate dehydrogenase family. Epd subfamily. In terms of assembly, homotetramer.

The protein resides in the cytoplasm. It carries out the reaction D-erythrose 4-phosphate + NAD(+) + H2O = 4-phospho-D-erythronate + NADH + 2 H(+). It participates in cofactor biosynthesis; pyridoxine 5'-phosphate biosynthesis; pyridoxine 5'-phosphate from D-erythrose 4-phosphate: step 1/5. Functionally, catalyzes the NAD-dependent conversion of D-erythrose 4-phosphate to 4-phosphoerythronate. This Shewanella halifaxensis (strain HAW-EB4) protein is D-erythrose-4-phosphate dehydrogenase.